The following is a 254-amino-acid chain: Imidazole glycerol phosphate synthase subunit HisF (254 aa).

Catalysis depends on residues Asp-12 and Asp-131.

Belongs to the HisA/HisF family. In terms of assembly, heterodimer of HisH and HisF.

The protein resides in the cytoplasm. It catalyses the reaction 5-[(5-phospho-1-deoxy-D-ribulos-1-ylimino)methylamino]-1-(5-phospho-beta-D-ribosyl)imidazole-4-carboxamide + L-glutamine = D-erythro-1-(imidazol-4-yl)glycerol 3-phosphate + 5-amino-1-(5-phospho-beta-D-ribosyl)imidazole-4-carboxamide + L-glutamate + H(+). The protein operates within amino-acid biosynthesis; L-histidine biosynthesis; L-histidine from 5-phospho-alpha-D-ribose 1-diphosphate: step 5/9. Functionally, IGPS catalyzes the conversion of PRFAR and glutamine to IGP, AICAR and glutamate. The HisF subunit catalyzes the cyclization activity that produces IGP and AICAR from PRFAR using the ammonia provided by the HisH subunit. The sequence is that of Imidazole glycerol phosphate synthase subunit HisF from Desulfitobacterium hafniense (strain Y51).